The sequence spans 354 residues: Transcription factor ATOH1 (354 aa).

A compositionally biased stretch (basic and acidic residues) spans 1 to 21 (MSRLLHAEEWAEVKELGDHHR). Disordered regions lie at residues 1–55 (MSRL…ELSL) and 91–122 (EAAA…PGPV). The segment covering 26–38 (HHLPQPPPPPQPP) has biased composition (pro residues). The segment covering 94–107 (APRDEVDGRGELVR) has biased composition (basic and acidic residues). Residues 108 to 122 (RSSGGASSSKSPGPV) show a composition bias toward low complexity. The region spanning 159–211 (QRRLAANARERRRMHGLNHAFDQLRNVIPSFNNDKKLSKYETLQMAQIYINAL) is the bHLH domain. 2 disordered regions span residues 216–277 (QTPS…TRFS) and 312–354 (SPSL…DEAS). Low complexity predominate over residues 250-264 (NATAAGAQQASGGSQ). Over residues 335 to 354 (HRSDGEFSPHSHYSDSDEAS) the composition is skewed to basic and acidic residues.

Efficient DNA binding requires dimerization with another bHLH protein.

The protein resides in the nucleus. In terms of biological role, transcriptional regulator. Activates E box-dependent transcription in collaboration with TCF3/E47, but the activity is completely antagonized by the negative regulator of neurogenesis HES1. Plays a role in the differentiation of subsets of neural cells by activating E box-dependent transcription. In Homo sapiens (Human), this protein is Transcription factor ATOH1.